The following is a 423-amino-acid chain: Maltooligosaccharide ABC transporter solute-binding lipoprotein (423 aa).

An N-terminal signal peptide occupies residues 1 to 24 (MSSKFMKSAAVLGTATLASLLLVA). Cys-25 is lipidated: N-palmitoyl cysteine. Cys-25 carries the S-diacylglycerol cysteine lipid modification. Substrate contacts are provided by residues Tyr-52, Asp-77, Asp-83, 103 to 104 (DR), Glu-148, Asp-193, Asn-196, 251 to 254 (EGAG), Trp-274, and Lys-307.

It belongs to the bacterial solute-binding protein 1 family.

It localises to the cell membrane. Functionally, part of an ABC transporter complex involved in the uptake of maltodextrins. Binds glycogen-derived linear maltooligosaccharides increasing in size from maltotriose to maltooctaose with the highest affinity for maltotriose. Has a very weak affinity for maltose. Has also a very low affinity for maltotetraitol, indicating that the binding is selective for maltooligosaccharides with an intact reducing end. The polypeptide is Maltooligosaccharide ABC transporter solute-binding lipoprotein (Streptococcus pneumoniae serotype 4 (strain ATCC BAA-334 / TIGR4)).